A 577-amino-acid polypeptide reads, in one-letter code: Cytidine monophosphate-N-acetylneuraminic acid hydroxylase (577 aa).

Positions 1 to 4 are excised as a propeptide; it reads MMDR. In terms of domain architecture, Rieske spans 14–112; that stretch reads LSPAEVANLK…IEMDENNGLS (99 aa). Residues cysteine 54, histidine 56, cysteine 75, and histidine 78 each contribute to the [2Fe-2S] cluster site.

It belongs to the CMP-Neu5Ac hydroxylase family. [2Fe-2S] cluster serves as cofactor. In terms of tissue distribution, expressed in all tissues tested, except in brain.

The protein localises to the cytoplasm. It is found in the endoplasmic reticulum. The catalysed reaction is CMP-N-acetyl-beta-neuraminate + 2 Fe(II)-[cytochrome b5] + O2 + 2 H(+) = CMP-N-glycoloyl-beta-neuraminate + 2 Fe(III)-[cytochrome b5] + H2O. The protein operates within amino-sugar metabolism; N-acetylneuraminate metabolism. Its function is as follows. Sialic acids are components of carbohydrate chains of glycoconjugates and are involved in cell-cell recognition and cell-pathogen interactions. Catalyzes the conversion of CMP-N-acetylneuraminic acid (CMP-Neu5Ac) into its hydroxylated derivative CMP-N-glycolylneuraminic acid (CMP-Neu5Gc), a sialic acid abundantly expressed at the surface of many cells. The protein is Cytidine monophosphate-N-acetylneuraminic acid hydroxylase (Cmah) of Mus musculus (Mouse).